Reading from the N-terminus, the 411-residue chain is LL-diaminopimelate aminotransferase (411 aa).

Residues Tyr-15 and Gly-42 each coordinate substrate. Pyridoxal 5'-phosphate-binding positions include Tyr-72, 108 to 109, Tyr-132, Asn-187, Tyr-218, and 246 to 248; these read SK and SFS. Lys-109, Tyr-132, and Asn-187 together coordinate substrate. Lys-249 carries the post-translational modification N6-(pyridoxal phosphate)lysine. Arg-257 and Asn-292 together coordinate pyridoxal 5'-phosphate. Residues Asn-292 and Arg-388 each contribute to the substrate site.

It belongs to the class-I pyridoxal-phosphate-dependent aminotransferase family. LL-diaminopimelate aminotransferase subfamily. As to quaternary structure, homodimer. Requires pyridoxal 5'-phosphate as cofactor.

It catalyses the reaction (2S,6S)-2,6-diaminopimelate + 2-oxoglutarate = (S)-2,3,4,5-tetrahydrodipicolinate + L-glutamate + H2O + H(+). It participates in amino-acid biosynthesis; L-lysine biosynthesis via DAP pathway; LL-2,6-diaminopimelate from (S)-tetrahydrodipicolinate (aminotransferase route): step 1/1. Functionally, involved in the synthesis of meso-diaminopimelate (m-DAP or DL-DAP), required for both lysine and peptidoglycan biosynthesis. Catalyzes the direct conversion of tetrahydrodipicolinate to LL-diaminopimelate. The chain is LL-diaminopimelate aminotransferase from Trichodesmium erythraeum (strain IMS101).